The primary structure comprises 105 residues: Protein S100-A11 (105 aa).

Residue methionine 1 is modified to N-acetylmethionine. At alanine 2 the chain carries N-acetylalanine; in Protein S100-A11, N-terminally processed. Lysine 3 is modified (N6-acetyllysine). A phosphoserine mark is found at serine 5 and serine 6. Threonine 10 carries the phosphothreonine modification. EF-hand domains are found at residues 13 to 49 (CIESLIAVFQKYAGKDGYNYTLSKTEFLSFMNTELAA) and 55 to 90 (KDPGVLDRMMKKLDTNSDGQLDFSEFLNLIGGLAMA). The residue at position 27 (lysine 27) is an N6-acetyllysine. Threonine 33, glutamate 38, aspartate 68, asparagine 70, aspartate 72, glutamine 74, and glutamate 79 together coordinate Ca(2+).

This sequence belongs to the S-100 family. In terms of assembly, homodimer; disulfide-linked. In terms of processing, phosphorylation at Thr-10 by PRKCA significantly suppresses homodimerization and promotes association with NCL/nucleolin which induces nuclear translocation.

Its subcellular location is the cytoplasm. The protein localises to the nucleus. Its function is as follows. Facilitates the differentiation and the cornification of keratinocytes. The chain is Protein S100-A11 (S100A11) from Homo sapiens (Human).